Reading from the N-terminus, the 106-residue chain is Large ribosomal subunit protein cL38 (106 aa).

A chloroplast-targeting transit peptide spans 1–39; it reads MSVSAIFGTGIVTVAASPVLRQFQVPKLGNGGGLGMVIE. Positions 42–70 are disordered; that stretch reads SRPQKKSTAHHRKTRPKKTQPWDIKRKPT. The segment covering 44-59 has biased composition (basic residues); that stretch reads PQKKSTAHHRKTRPKK.

The protein belongs to the chloroplast-specific ribosomal protein cL38 family. In terms of assembly, part of the 50S ribosomal subunit.

The protein resides in the plastid. It is found in the chloroplast. In Arabidopsis thaliana (Mouse-ear cress), this protein is Large ribosomal subunit protein cL38 (PSRP6).